The primary structure comprises 447 residues: MAAQTAPELAKLDLNKNSGSAEANVVSNGGSDKDDAENEGDSDDDKDEAGGSAEVNTEKKKKKKRSKKKKKAAKVQSSPPRIPLTTLFPNNAFPEGEIVEYLNDNSYRTTNEEKRHLDRMNNDFLTEYRQAAEIHRQVRQYAQKELIKPGATLTDIAEGIEDGVRHLTGHMGLEEGDSLIAGMGFPTGLNINHCAAHYSPNAGNKVVLQHGDVMKVDFGVHVNGRIVDSAFTVAFDPVFDPLLTAVKEATNTGIKEAGIDVRMSDIGAAIQETMESYELEINGTSYPIKAVRNLNGHTIGQYEIHGGVNGKSVPIVKGGDQTKMEEGETYAIETFGSTGKGYVRDDMETSHYAKVPNAPSVPLRLSSAKNLYSLINKNFGTLPFCRRYLDRLGQEKYLLGLNNLVSSGLVDAYPPLCDVKGSYTAQFEHTILLRPNVKEVISRGDDY.

Positions 1-89 (MAAQTAPELA…PRIPLTTLFP (89 aa)) are disordered. A compositionally biased stretch (polar residues) spans 15-30 (NKNSGSAEANVVSNGG). The segment covering 34 to 47 (DDAENEGDSDDDKD) has biased composition (acidic residues). The span at 59 to 73 (KKKKKKRSKKKKKAA) shows a compositional bias: basic residues. His197 contacts substrate. A divalent metal cation-binding residues include Asp217, Asp228, and His297. Substrate is bound at residue His305. A divalent metal cation contacts are provided by Glu333 and Glu428.

The protein belongs to the peptidase M24A family. Methionine aminopeptidase eukaryotic type 2 subfamily. Requires Co(2+) as cofactor. The cofactor is Zn(2+). It depends on Mn(2+) as a cofactor. Fe(2+) is required as a cofactor.

It localises to the cytoplasm. It carries out the reaction Release of N-terminal amino acids, preferentially methionine, from peptides and arylamides.. Cotranslationally removes the N-terminal methionine from nascent proteins. The N-terminal methionine is often cleaved when the second residue in the primary sequence is small and uncharged (Met-Ala-, Cys, Gly, Pro, Ser, Thr, or Val). The protein is Methionine aminopeptidase 2-2 of Arthroderma otae (strain ATCC MYA-4605 / CBS 113480) (Microsporum canis).